Consider the following 81-residue polypeptide: Large ribosomal subunit protein bL31B (81 aa).

The protein belongs to the bacterial ribosomal protein bL31 family. Type B subfamily. Part of the 50S ribosomal subunit.

The sequence is that of Large ribosomal subunit protein bL31B from Lactobacillus helveticus (strain DPC 4571).